The sequence spans 320 residues: ATP-dependent 6-phosphofructokinase (320 aa).

Residue Gly-12 coordinates ATP. 22–26 (RAVVR) is a binding site for ADP. Residues 73–74 (RF) and 103–106 (GDGS) each bind ATP. A Mg(2+)-binding site is contributed by Asp-104. A substrate-binding site is contributed by 126–128 (TID). Residue Asp-128 is the Proton acceptor of the active site. Arg-155 contacts ADP. Residues Arg-163 and 170 to 172 (MGR) each bind substrate. ADP contacts are provided by residues 186–188 (GAE) and 214–216 (KNH). Substrate-binding positions include Glu-223, Arg-244, and 250-253 (HIQR).

It belongs to the phosphofructokinase type A (PFKA) family. ATP-dependent PFK group I subfamily. Prokaryotic clade 'B1' sub-subfamily. As to quaternary structure, homotetramer. It depends on Mg(2+) as a cofactor.

The protein localises to the cytoplasm. The catalysed reaction is beta-D-fructose 6-phosphate + ATP = beta-D-fructose 1,6-bisphosphate + ADP + H(+). Its pathway is carbohydrate degradation; glycolysis; D-glyceraldehyde 3-phosphate and glycerone phosphate from D-glucose: step 3/4. Allosterically activated by ADP and other diphosphonucleosides, and allosterically inhibited by phosphoenolpyruvate. Catalyzes the phosphorylation of D-fructose 6-phosphate to fructose 1,6-bisphosphate by ATP, the first committing step of glycolysis. The chain is ATP-dependent 6-phosphofructokinase from Teredinibacter turnerae (strain ATCC 39867 / T7901).